A 215-amino-acid chain; its full sequence is Probable transaldolase (215 aa).

Catalysis depends on K83, which acts as the Schiff-base intermediate with substrate.

This sequence belongs to the transaldolase family. Type 3B subfamily.

It is found in the cytoplasm. The catalysed reaction is D-sedoheptulose 7-phosphate + D-glyceraldehyde 3-phosphate = D-erythrose 4-phosphate + beta-D-fructose 6-phosphate. It functions in the pathway carbohydrate degradation; pentose phosphate pathway; D-glyceraldehyde 3-phosphate and beta-D-fructose 6-phosphate from D-ribose 5-phosphate and D-xylulose 5-phosphate (non-oxidative stage): step 2/3. In terms of biological role, transaldolase is important for the balance of metabolites in the pentose-phosphate pathway. The polypeptide is Probable transaldolase (Methanococcus vannielii (strain ATCC 35089 / DSM 1224 / JCM 13029 / OCM 148 / SB)).